The following is a 465-amino-acid chain: A-type ATP synthase subunit B (465 aa).

It belongs to the ATPase alpha/beta chains family. Has multiple subunits with at least A(3), B(3), C, D, E, F, H, I and proteolipid K(x).

It is found in the cell membrane. Functionally, component of the A-type ATP synthase that produces ATP from ADP in the presence of a proton gradient across the membrane. The B chain is a regulatory subunit. In Sulfurisphaera tokodaii (strain DSM 16993 / JCM 10545 / NBRC 100140 / 7) (Sulfolobus tokodaii), this protein is A-type ATP synthase subunit B.